We begin with the raw amino-acid sequence, 793 residues long: Probable phosphoketolase (793 aa).

It belongs to the XFP family. It depends on thiamine diphosphate as a cofactor.

This Gloeobacter violaceus (strain ATCC 29082 / PCC 7421) protein is Probable phosphoketolase.